The following is a 101-amino-acid chain: NADH-quinone oxidoreductase subunit K (101 aa).

Helical transmembrane passes span 4-24 (LAHY…GIFL), 29-49 (IIII…NFVA), and 61-81 (IFVF…LAIL).

This sequence belongs to the complex I subunit 4L family. As to quaternary structure, NDH-1 is composed of 14 different subunits. Subunits NuoA, H, J, K, L, M, N constitute the membrane sector of the complex.

It localises to the cell inner membrane. It carries out the reaction a quinone + NADH + 5 H(+)(in) = a quinol + NAD(+) + 4 H(+)(out). In terms of biological role, NDH-1 shuttles electrons from NADH, via FMN and iron-sulfur (Fe-S) centers, to quinones in the respiratory chain. The immediate electron acceptor for the enzyme in this species is believed to be ubiquinone. Couples the redox reaction to proton translocation (for every two electrons transferred, four hydrogen ions are translocated across the cytoplasmic membrane), and thus conserves the redox energy in a proton gradient. The chain is NADH-quinone oxidoreductase subunit K from Burkholderia vietnamiensis (strain G4 / LMG 22486) (Burkholderia cepacia (strain R1808)).